Reading from the N-terminus, the 131-residue chain is Phosphomevalonate dehydratase small subunit (131 aa).

Ser62 acts as the Proton acceptor in catalysis.

Belongs to the AcnX type II small subunit family. In terms of assembly, heterodimer composed of a large subunit (PMDh-L) and a small subunit (PMDh-S).

It catalyses the reaction (R)-5-phosphomevalonate = (2E)-3-methyl-5-phosphooxypent-2-enoate + H2O. Its pathway is isoprenoid biosynthesis; isopentenyl diphosphate biosynthesis via mevalonate pathway. In terms of biological role, component of a hydro-lyase that catalyzes the dehydration of mevalonate 5-phosphate (MVA5P) to form trans-anhydromevalonate 5-phosphate (tAHMP). Involved in the archaeal mevalonate (MVA) pathway, which provides fundamental precursors for isoprenoid biosynthesis, such as isopentenyl diphosphate (IPP) and dimethylallyl diphosphate (DMAPP). The protein is Phosphomevalonate dehydratase small subunit of Thermococcus gammatolerans (strain DSM 15229 / JCM 11827 / EJ3).